We begin with the raw amino-acid sequence, 275 residues long: Myb/SANT-like DNA-binding domain-containing protein 3 (275 aa).

Residues 13–78 enclose the Myb-like domain; that stretch reads FSELEKSILL…QLKKCWENIK (66 aa). Residues Ser-96 and Ser-98 each carry the phosphoserine modification. A Glycyl lysine isopeptide (Lys-Gly) (interchain with G-Cter in SUMO2) cross-link involves residue Lys-154. Positions 211–247 form a coiled coil; the sequence is QLIQMNEVHVAKIQQIERECEMAEEEHRIKMEVLNKK. Ser-274 carries the post-translational modification Phosphoserine.

Belongs to the MSANTD3 family.

The sequence is that of Myb/SANT-like DNA-binding domain-containing protein 3 (MSANTD3) from Bos taurus (Bovine).